The primary structure comprises 60 residues: Large ribosomal subunit protein uL30 (60 aa).

It belongs to the universal ribosomal protein uL30 family. As to quaternary structure, part of the 50S ribosomal subunit.

The sequence is that of Large ribosomal subunit protein uL30 from Lachnoclostridium phytofermentans (strain ATCC 700394 / DSM 18823 / ISDg) (Clostridium phytofermentans).